The chain runs to 197 residues: Adenylate kinase isoenzyme 6 homolog FAP7 (197 aa).

ATP-binding residues include glycine 17, glycine 19, lysine 20, serine 21, and serine 22. Positions asparagine 38–valine 61 are NMPbind. The segment at alanine 113–glutamate 123 is LID. Arginine 114 lines the ATP pocket. Residues proline 176–glutamate 197 are disordered. Phosphotyrosine is present on tyrosine 183. Phosphoserine occurs at positions 188 and 196.

This sequence belongs to the adenylate kinase family. AK6 subfamily. Interacts with small ribosomal subunit protein uS11B/RPS14B. Not a structural component of 43S pre-ribosomes, but transiently interacts with them by binding to uS11/RPS14.

It is found in the cytoplasm. The protein localises to the nucleus. The catalysed reaction is AMP + ATP = 2 ADP. It carries out the reaction ATP + H2O = ADP + phosphate + H(+). Broad-specificity nucleoside monophosphate (NMP) kinase that catalyzes the reversible transfer of the terminal phosphate group between nucleoside triphosphates and monophosphates. Also has ATPase activity. Involved in the late cytoplasmic maturation steps of the 40S ribosomal particles, specifically 18S rRNA maturation. Required for cleavage of the 20S pre-rRNA at site D in the cytoplasm. While NMP activity is not required for ribosome maturation, ATPase activity is. Associates transiently with small ribosomal subunit protein uS11. ATP hydrolysis breaks the interaction with uS11. May temporarily remove uS11 from the ribosome to enable a conformational change of the ribosomal RNA that is needed for the final maturation step of the small ribosomal subunit. Promotes formation of the rotated state in 80S-like ribosomes, a key intermediate in translocation, thereby releasing the essential assembly factor DIM1 from pre-40S subunits. Its NMP activity may have a role in nuclear energy homeostasis. Involved in oxidative stress response. Required for POS9-dependent target gene transcription upon oxidative stress. The sequence is that of Adenylate kinase isoenzyme 6 homolog FAP7 from Saccharomyces cerevisiae (strain ATCC 204508 / S288c) (Baker's yeast).